The sequence spans 211 residues: Dual specificity protein phosphatase 26 (211 aa).

The Tyrosine-protein phosphatase domain occupies 60–207 (NHADEVWPGL…LLALDRRLRQ (148 aa)). Catalysis depends on C152, which acts as the Phosphocysteine intermediate.

It belongs to the protein-tyrosine phosphatase family. Non-receptor class dual specificity subfamily. Interacts with HSF4.

Its subcellular location is the cytoplasm. The protein localises to the nucleus. It localises to the golgi apparatus. It carries out the reaction O-phospho-L-tyrosyl-[protein] + H2O = L-tyrosyl-[protein] + phosphate. The catalysed reaction is O-phospho-L-seryl-[protein] + H2O = L-seryl-[protein] + phosphate. It catalyses the reaction O-phospho-L-threonyl-[protein] + H2O = L-threonyl-[protein] + phosphate. Its function is as follows. Inactivates MAPK1 and MAPK3 which leads to dephosphorylation of heat shock factor protein 4 and a reduction in its DNA-binding activity. This chain is Dual specificity protein phosphatase 26 (DUSP26), found in Bos taurus (Bovine).